Consider the following 25-residue polypeptide: Small ribosomal subunit protein eS32B (25 aa).

The disordered stretch occupies residues 1–25; that stretch reads MRAKWRKKRTRRLKRKRRKVRARSK.

The protein belongs to the eukaryotic ribosomal protein eS32 family. Component of the small ribosomal subunit (SSU). Mature yeast ribosomes consist of a small (40S) and a large (60S) subunit. The 40S small subunit contains 1 molecule of ribosomal RNA (18S rRNA) and 33 different proteins (encoded by 57 genes). The large 60S subunit contains 3 rRNA molecules (25S, 5.8S and 5S rRNA) and 46 different proteins (encoded by 81 genes).

It is found in the cytoplasm. Its function is as follows. Component of the ribosome, a large ribonucleoprotein complex responsible for the synthesis of proteins in the cell. The small ribosomal subunit (SSU) binds messenger RNAs (mRNAs) and translates the encoded message by selecting cognate aminoacyl-transfer RNA (tRNA) molecules. The large subunit (LSU) contains the ribosomal catalytic site termed the peptidyl transferase center (PTC), which catalyzes the formation of peptide bonds, thereby polymerizing the amino acids delivered by tRNAs into a polypeptide chain. The nascent polypeptides leave the ribosome through a tunnel in the LSU and interact with protein factors that function in enzymatic processing, targeting, and the membrane insertion of nascent chains at the exit of the ribosomal tunnel. This chain is Small ribosomal subunit protein eS32B, found in Saccharomyces cerevisiae (strain ATCC 204508 / S288c) (Baker's yeast).